Here is a 156-residue protein sequence, read N- to C-terminus: Ecotin (156 aa).

An N-terminal signal peptide occupies residues 1–19 (MKALLIAAGVAALSSTAMA). Cys65 and Cys102 are oxidised to a cystine.

The protein belongs to the protease inhibitor I11 (ecotin) family. As to quaternary structure, homodimer.

It is found in the periplasm. In terms of biological role, general inhibitor of family S1 serine proteases. The sequence is that of Ecotin from Pseudomonas aeruginosa (strain UCBPP-PA14).